A 538-amino-acid polypeptide reads, in one-letter code: Transmembrane protein 266 (538 aa).

The Cytoplasmic portion of the chain corresponds to 1–102; it reads MALVTSFNMA…VFLLSASLNS (102 aa). The helical transmembrane segment at 103 to 123 threads the bilayer; the sequence is FLVACVILVVILLTLELLIDT. Over 124 to 130 the chain is Extracellular; that stretch reads KLLQFSN. The helical transmembrane segment at 131–151 threads the bilayer; it reads AFQFAGVIHWISLVILSVFFS. At 152–169 the chain is on the cytoplasmic side; that stretch reads ETVLRIVVLGIWDYIENK. A helical membrane pass occupies residues 170-190; sequence IEVFDGAVIILSLAPMVASTV. The Extracellular segment spans residues 191–199; it reads ANGPRSPWD. Residues 200–220 form a helical membrane-spanning segment; that stretch reads AISLIIMFRIWRVKRVIDAYV. Residues 221–538 lie on the Cytoplasmic side of the membrane; sequence LPVKLEMEMV…EPKLHTVPEA (318 aa). Residues 232-278 adopt a coiled-coil conformation; it reads QQYEKAKAIQDEQLERLTQICQEQGFEIRQLRAHLAQQDLDLAAERE. Disordered regions lie at residues 380–435 and 453–483; these read NSTC…PLPL and SSLS…VQTS. Over residues 381 to 396 the composition is skewed to low complexity; sequence STCASATSETTSHSTC. The segment covering 397 to 417 has biased composition (polar residues); it reads GSVTRAQSASSQTLGSSTDCS. The segment covering 425–434 has biased composition (low complexity); it reads PSKPRSSPLP.

Homodimer; disulfide-linked. As to expression, in brain, present in the granule layer of the cerebellar cortex. Localizes on the post-synaptic side of glutamatergic mossy fibers and granule cells in the cerebellum (at protein level). In terms of tissue distribution, predominantly expressed in granule cells in cerebellum (at protein level).

It localises to the cell projection. It is found in the dendrite. The protein resides in the perikaryon. Its subcellular location is the cell membrane. Its function is as follows. Voltage-sensor protein present on the post-synaptic side of glutamatergic mossy fibers and granule cells in the cerebellum. Despite the presence of a voltage-sensor segment, does not form a functional ion channel and its precise role remains unclear. Undergoes both rapid and slow structural rearrangements in response to changes in voltage. Contains a zinc-binding site that can regulate the slow conformational transition. This is Transmembrane protein 266 from Mus musculus (Mouse).